A 252-amino-acid chain; its full sequence is UPF0714 protein YndL (252 aa).

The chain crosses the membrane as a helical span at residues 33–51 (IVKLLMIFMVFTPISSIYA).

This sequence belongs to the UPF0714 family.

It localises to the cell membrane. This is UPF0714 protein YndL (yndL) from Bacillus subtilis (strain 168).